The following is a 739-amino-acid chain: Poly(A) polymerase alpha (739 aa).

Residues 1–17 (MPFPVTTQGSQQTQPPQ) are compositionally biased toward low complexity. Positions 1-22 (MPFPVTTQGSQQTQPPQRHYGI) are disordered. Phosphoserine occurs at positions 10 and 24. Residues 100 to 102 (FGS), T109, 113 to 115 (DID), D167, K228, Y237, and 246 to 247 (GV) contribute to the ATP site. 3 residues coordinate Mg(2+): D113, D115, and D167. Residues K444, K445, K506, and K507 each participate in a glycyl lysine isopeptide (Lys-Gly) (interchain with G-Cter in SUMO) cross-link. The Nuclear localization signal 1 signature appears at 490 to 507 (RKQLHQLLPSHVLQKRKK). The ser/Thr-rich stretch occupies residues 508–643 (HSTEGVKLTA…TKVPNPIVGV (136 aa)). Residues 523–534 (LDLSMDSDNSMS) are compositionally biased toward low complexity. The interval 523 to 725 (LDLSMDSDNS…SDIPALPANP (203 aa)) is disordered. Positions 535–557 (VPSPTSAMKTSPLNSSGSSQGRN) are enriched in polar residues. S537 carries the post-translational modification Phosphoserine; by MAPK. Position 558 is a phosphoserine (S558). The span at 566-582 (ASVTSIQASEVSVPQAN) shows a compositional bias: polar residues. Low complexity-rich tracts occupy residues 583 to 594 (SSESPGGPSSES) and 611 to 622 (TVSRVVSSTRLV). K635 and K644 each carry N6-acetyllysine. The Nuclear localization signal 2 motif lies at 644 to 659 (KRTSSPNKEESPKKTK). Composition is skewed to basic and acidic residues over residues 650–660 (NKEESPKKTKT) and 676–686 (GHDKTETKEQV). A required for interaction with NUDT21 region spans residues 671-739 (CLALSGHDKT…KNSIKLRLNR (69 aa)). Residues 691 to 715 (SAVQSETVPASASLLASQKTSSTDL) are compositionally biased toward polar residues. K730 carries the N6-acetyllysine; alternate modification. Residue K730 forms a Glycyl lysine isopeptide (Lys-Gly) (interchain with G-Cter in SUMO); alternate linkage. Position 732 is a phosphoserine (S732). K734 carries the N6-acetyllysine; alternate modification. Residue K734 forms a Glycyl lysine isopeptide (Lys-Gly) (interchain with G-Cter in SUMO); alternate linkage.

It belongs to the poly(A) polymerase family. As to quaternary structure, monomer. Found in a complex with CPSF1, FIP1L1 and PAPOLA. Interacts with AHCYL1 and FIP1L1; the interaction with AHCYL1 seems to increase interaction with FIP1L1. Interacts with NUDT21; the interaction is diminished by acetylation. Interacts with KPNB1; the interaction promotes PAP nuclear import and is inhibited by acetylation of PAP. Mg(2+) is required as a cofactor. It depends on Mn(2+) as a cofactor. Post-translationally, polysumoylated. Varying sumoylation depending on tissue- and cell-type. Highly sumoylated in bladder and NIH 3T3 cells. Sumoylation is required for nuclear localization and enhances PAP stability. Desumoylated by SENP1. Inhibits polymerase activity. Hyperphosphorylation on multiple CDK2 consensus and non-consensus sites in the C-terminal Ser/Thr-rich region represses PAP activity in late M-phase. Phosphorylation/dephosphorylation may regulate the interaction between PAP and CPSF. In terms of processing, acetylated in the C-terminus. Acetylation decreases interaction with NUDT21 and KPNB1, and inhibits nuclear localization through inhibiting binding to the importin alpha/beta complex. Expressed in brain, thymus, lung, kidney, bladder, testis and spleen.

It localises to the nucleus. The catalysed reaction is RNA(n) + ATP = RNA(n)-3'-adenine ribonucleotide + diphosphate. Polymerase that creates the 3'-poly(A) tail of mRNA's. Also required for the endoribonucleolytic cleavage reaction at some polyadenylation sites. May acquire specificity through interaction with a cleavage and polyadenylation specificity factor (CPSF) at its C-terminus. The protein is Poly(A) polymerase alpha (Papola) of Mus musculus (Mouse).